The primary structure comprises 159 residues: Anaerobic nitrite reductase HB2 (159 aa).

The Globin domain maps to 2–152 (GFTEKQEGLV…LAEAIKAEMK (151 aa)). The short motif at 35-39 (EIAPG) is the Homodimerization element. The heme b site is built by Ser-45, Lys-59, His-63, and His-98. A Homodimerization motif is present at residues 105–117 (DPHFEVVKEALLR).

The protein belongs to the plant globin family. As to quaternary structure, homodimer. The cofactor is heme b.

The protein resides in the cytoplasm. The protein localises to the nucleus. The enzyme catalyses Fe(III)-heme b-[protein] + nitric oxide + H2O = Fe(II)-heme b-[protein] + nitrite + 2 H(+). In terms of biological role, phytoglobin that reduces nitrite to nitric oxide (NO) under anoxic conditions (e.g. during flooding or in waterlogged soil). May not function as an oxygen storage or transport protein. Has an unusually high affinity for O(2) through an hexacoordinate heme iron because of a very low dissociation constant. The protein is Anaerobic nitrite reductase HB2 of Gossypium hirsutum (Upland cotton).